The following is a 361-amino-acid chain: Phosphoserine aminotransferase (361 aa).

Residue R43 coordinates L-glutamate. Pyridoxal 5'-phosphate-binding positions include 77 to 78 (AS), W103, T153, D173, and Q196. K197 carries the N6-(pyridoxal phosphate)lysine modification. 238–239 (NT) is a pyridoxal 5'-phosphate binding site.

The protein belongs to the class-V pyridoxal-phosphate-dependent aminotransferase family. SerC subfamily. Homodimer. Requires pyridoxal 5'-phosphate as cofactor.

Its subcellular location is the cytoplasm. It catalyses the reaction O-phospho-L-serine + 2-oxoglutarate = 3-phosphooxypyruvate + L-glutamate. The catalysed reaction is 4-(phosphooxy)-L-threonine + 2-oxoglutarate = (R)-3-hydroxy-2-oxo-4-phosphooxybutanoate + L-glutamate. Its pathway is amino-acid biosynthesis; L-serine biosynthesis; L-serine from 3-phospho-D-glycerate: step 2/3. It functions in the pathway cofactor biosynthesis; pyridoxine 5'-phosphate biosynthesis; pyridoxine 5'-phosphate from D-erythrose 4-phosphate: step 3/5. Its function is as follows. Catalyzes the reversible conversion of 3-phosphohydroxypyruvate to phosphoserine and of 3-hydroxy-2-oxo-4-phosphonooxybutanoate to phosphohydroxythreonine. This Stutzerimonas stutzeri (Pseudomonas stutzeri) protein is Phosphoserine aminotransferase.